We begin with the raw amino-acid sequence, 533 residues long: Probable protein kinase UbiB (533 aa).

The helical transmembrane segment at 24 to 44 threads the bilayer; the sequence is LILELPMLPWWLRLLGATLPW. The 369-residue stretch at 126-494 folds into the Protein kinase domain; sequence RFEREPLASA…WKGSRHDWLG (369 aa). Residues 132 to 140 and K154 each bind ATP; that span reads LASASVAQV. D289 (proton acceptor) is an active-site residue. A helical transmembrane segment spans residues 510-530; sequence LGQQLEAWPAWVMLAGGVFLI.

The protein belongs to the ABC1 family. UbiB subfamily.

Its subcellular location is the cell inner membrane. It functions in the pathway cofactor biosynthesis; ubiquinone biosynthesis [regulation]. In terms of biological role, is probably a protein kinase regulator of UbiI activity which is involved in aerobic coenzyme Q (ubiquinone) biosynthesis. The sequence is that of Probable protein kinase UbiB from Pseudomonas aeruginosa (strain UCBPP-PA14).